A 309-amino-acid chain; its full sequence is MSSGFKRPSPRTWRPKEEEELIELIVEACPTEGPRVKAGDDDAAVLPDGTVVNFDAMTRSRHVPKELRDRDLGWKFVASVVSDVGAMGGEPSFFGFSVCLDDEVDVEQLVLGISEGLREFGVSLIGGDVVEGEELVLSGTCLGKLKGEPLLMSNARPGDVVAVTGPLGGPNAFVRAILNGMEPEETLYERFARPRPPVEVGVELARGGYRAAVTDISDGLLAEAEAIARRSGVAIEIHTWKVPVDEGVEEVAQEFDVDPVDLALEGGEDYEFLICGPEDVVKEFGLTTIGRVTEGEGVRIVRNPRARSE.

2 residues coordinate Mg(2+): aspartate 41 and aspartate 55. Histidine 62 provides a ligand contact to substrate. Mg(2+)-binding residues include aspartate 83, aspartate 128, and aspartate 215. ATP is bound at residue 127–128 (GD). ATP is bound at residue serine 217. Position 218 (aspartate 218) interacts with Mg(2+). Position 268 (glutamate 268) interacts with substrate.

The protein belongs to the thiamine-monophosphate kinase family.

The catalysed reaction is thiamine phosphate + ATP = thiamine diphosphate + ADP. The protein operates within cofactor biosynthesis; thiamine diphosphate biosynthesis; thiamine diphosphate from thiamine phosphate: step 1/1. Catalyzes the ATP-dependent phosphorylation of thiamine-monophosphate (TMP) to form thiamine-pyrophosphate (TPP), the active form of vitamin B1. In Methanopyrus kandleri (strain AV19 / DSM 6324 / JCM 9639 / NBRC 100938), this protein is Thiamine-monophosphate kinase.